Consider the following 140-residue polypeptide: Small ribosomal subunit protein uS12 (140 aa).

The segment at 1–28 (MPTINQLVRKSRKALEKKSTAPALQKGY) is disordered. Aspartate 102 carries the post-translational modification 3-methylthioaspartic acid. The disordered stretch occupies residues 119 to 140 (GVDKRRQSRSKYGAKRPKEAKK). The span at 124-140 (RQSRSKYGAKRPKEAKK) shows a compositional bias: basic residues.

This sequence belongs to the universal ribosomal protein uS12 family. As to quaternary structure, part of the 30S ribosomal subunit. Contacts proteins S8 and S17. May interact with IF1 in the 30S initiation complex.

In terms of biological role, with S4 and S5 plays an important role in translational accuracy. Interacts with and stabilizes bases of the 16S rRNA that are involved in tRNA selection in the A site and with the mRNA backbone. Located at the interface of the 30S and 50S subunits, it traverses the body of the 30S subunit contacting proteins on the other side and probably holding the rRNA structure together. The combined cluster of proteins S8, S12 and S17 appears to hold together the shoulder and platform of the 30S subunit. The polypeptide is Small ribosomal subunit protein uS12 (Clostridioides difficile (strain 630) (Peptoclostridium difficile)).